Here is a 94-residue protein sequence, read N- to C-terminus: Integration host factor subunit beta (94 aa).

It belongs to the bacterial histone-like protein family. As to quaternary structure, heterodimer of an alpha and a beta chain.

This protein is one of the two subunits of integration host factor, a specific DNA-binding protein that functions in genetic recombination as well as in transcriptional and translational control. This Azorhizobium caulinodans (strain ATCC 43989 / DSM 5975 / JCM 20966 / LMG 6465 / NBRC 14845 / NCIMB 13405 / ORS 571) protein is Integration host factor subunit beta.